The sequence spans 347 residues: 3',5'-bisphosphate nucleotidase 2 (347 aa).

Asp-46 functions as the Proton acceptor in the catalytic mechanism. Residues Glu-71, Asp-134, Ile-136, and Asp-137 each contribute to the Mg(2+) site. Thr-139 serves as the catalytic Proton acceptor. Positions 139, 255, 258, 272, and 284 each coordinate adenosine 3',5'-bisphosphate. Ser-255, Lys-258, Arg-272, and Asp-284 together coordinate AMP. Asp-284 contributes to the Mg(2+) binding site.

It belongs to the inositol monophosphatase superfamily. The cofactor is Mg(2+). Very low expression in roots, leaves, stems, flowers and siliques.

The enzyme catalyses adenosine 3',5'-bisphosphate + H2O = AMP + phosphate. It catalyses the reaction 3'-phosphoadenylyl sulfate + H2O = adenosine 5'-phosphosulfate + phosphate. The catalysed reaction is 1D-myo-inositol 1,4-bisphosphate + H2O = 1D-myo-inositol 4-phosphate + phosphate. It functions in the pathway signal transduction; phosphatidylinositol signaling pathway. Its activity is regulated as follows. Inhibited by Li(+) (IC(50)=10 mM), Na(+) (IC(50)=200 mM) and Ca(2+) (IC(50)=0.03 mM). Functionally, phosphatase that converts adenosine 3'-phosphate 5'-phosphosulfate (PAPS) to adenosine 5'-phosphosulfate (APS) and 3'-phosphoadenosine 5'-phosphate (3'-PAP) to AMP. May regulate the flux of sulfur in the sulfur-activation pathway by converting PAPS to APS. Prevents both the toxicity of PAP on RNA processing enzymes as well as the product inhibition by PAP of sulfate conjugation. Is also able to hydrolyze inositol 1,4-bisphosphate. The protein is 3',5'-bisphosphate nucleotidase 2 of Arabidopsis thaliana (Mouse-ear cress).